We begin with the raw amino-acid sequence, 144 residues long: Putative sugar phosphate isomerase RBE_0278 (144 aa).

His-12 serves as a coordination point for substrate. His-101 functions as the Proton donor in the catalytic mechanism. Residue Arg-135 coordinates substrate.

Belongs to the LacAB/RpiB family.

The protein is Putative sugar phosphate isomerase RBE_0278 of Rickettsia bellii (strain RML369-C).